The primary structure comprises 723 residues: BBSome complex assembly protein BBS10 (723 aa).

This sequence belongs to the TCP-1 chaperonin family. Component of a complex composed at least of MKKS, BBS10, BBS12, TCP1, CCT2, CCT3, CCT4, CCT5 and CCT8.

Its subcellular location is the cell projection. The protein localises to the cilium. Its function is as follows. Probable molecular chaperone that assists the folding of proteins upon ATP hydrolysis. Plays a role in the assembly of BBSome, a complex involved in ciliogenesis regulating transports vesicles to the cilia. Involved in adipogenic differentiation. This Pongo abelii (Sumatran orangutan) protein is BBSome complex assembly protein BBS10 (BBS10).